The chain runs to 484 residues: UDP-N-acetylmuramate--L-alanine ligase (484 aa).

Glycine 125–threonine 131 contributes to the ATP binding site.

It belongs to the MurCDEF family.

It is found in the cytoplasm. It carries out the reaction UDP-N-acetyl-alpha-D-muramate + L-alanine + ATP = UDP-N-acetyl-alpha-D-muramoyl-L-alanine + ADP + phosphate + H(+). The protein operates within cell wall biogenesis; peptidoglycan biosynthesis. Functionally, cell wall formation. The polypeptide is UDP-N-acetylmuramate--L-alanine ligase (Buchnera aphidicola subsp. Acyrthosiphon pisum (strain 5A)).